Consider the following 358-residue polypeptide: Spermatogenesis-associated protein 22 (358 aa).

4 stretches are compositionally biased toward polar residues: residues 1 to 12 (MKRNLNESSARS), 30 to 51 (QPLT…DSYG), 81 to 121 (PASA…TSLR), and 150 to 159 (QQQKQFQTPE). Disordered stretches follow at residues 1-51 (MKRN…DSYG), 81-122 (PASA…SLRT), and 150-172 (QQQK…AEVP).

In terms of assembly, component of a multiprotein complex with MEIOB and RPA2. Interacts with MEIOB. Interacts with the complex BRME1:HSF2BP:BRCA2. As to expression, specifically expressed in gonadal germ cells, when male and female germ cells progress through prophase of meiosis I.

It localises to the chromosome. Functionally, meiosis-specific protein required for homologous recombination in meiosis I. The chain is Spermatogenesis-associated protein 22 from Mus musculus (Mouse).